We begin with the raw amino-acid sequence, 306 residues long: Acetyl-coenzyme A carboxylase carboxyl transferase subunit beta (306 aa).

One can recognise a CoA carboxyltransferase N-terminal domain in the interval 25-294 (VWTKCDSCGQ…PSPDAPREAV (270 aa)). The Zn(2+) site is built by C29, C32, C48, and C51. The C4-type zinc finger occupies 29-51 (CDSCGQVLYRAELERNLEVCPKC). Residues 286–306 (SPDAPREAVVVPPVPDQDHEA) are disordered.

This sequence belongs to the AccD/PCCB family. In terms of assembly, acetyl-CoA carboxylase is a heterohexamer composed of biotin carboxyl carrier protein (AccB), biotin carboxylase (AccC) and two subunits each of ACCase subunit alpha (AccA) and ACCase subunit beta (AccD). It depends on Zn(2+) as a cofactor.

The protein resides in the cytoplasm. It catalyses the reaction N(6)-carboxybiotinyl-L-lysyl-[protein] + acetyl-CoA = N(6)-biotinyl-L-lysyl-[protein] + malonyl-CoA. The protein operates within lipid metabolism; malonyl-CoA biosynthesis; malonyl-CoA from acetyl-CoA: step 1/1. Its function is as follows. Component of the acetyl coenzyme A carboxylase (ACC) complex. Biotin carboxylase (BC) catalyzes the carboxylation of biotin on its carrier protein (BCCP) and then the CO(2) group is transferred by the transcarboxylase to acetyl-CoA to form malonyl-CoA. The sequence is that of Acetyl-coenzyme A carboxylase carboxyl transferase subunit beta from Cronobacter sakazakii (strain ATCC BAA-894) (Enterobacter sakazakii).